A 116-amino-acid chain; its full sequence is Aspartate 1-decarboxylase (116 aa).

S25 (schiff-base intermediate with substrate; via pyruvic acid) is an active-site residue. The residue at position 25 (S25) is a Pyruvic acid (Ser). T57 provides a ligand contact to substrate. Y58 serves as the catalytic Proton donor. 72 to 74 (GAA) is a binding site for substrate.

It belongs to the PanD family. Heterooctamer of four alpha and four beta subunits. The cofactor is pyruvate. In terms of processing, is synthesized initially as an inactive proenzyme, which is activated by self-cleavage at a specific serine bond to produce a beta-subunit with a hydroxyl group at its C-terminus and an alpha-subunit with a pyruvoyl group at its N-terminus.

Its subcellular location is the cytoplasm. The enzyme catalyses L-aspartate + H(+) = beta-alanine + CO2. The protein operates within cofactor biosynthesis; (R)-pantothenate biosynthesis; beta-alanine from L-aspartate: step 1/1. Functionally, catalyzes the pyruvoyl-dependent decarboxylation of aspartate to produce beta-alanine. This chain is Aspartate 1-decarboxylase, found in Helicobacter pylori (strain HPAG1).